Reading from the N-terminus, the 365-residue chain is GTPase Obg (365 aa).

One can recognise an Obg domain in the interval 1–159 (MKFIDEARIE…RMLKLELKVL (159 aa)). The OBG-type G domain maps to 160-334 (ADVGLLGMPN…LIYAIKDHLQ (175 aa)). GTP-binding positions include 166–173 (GMPNAGKS), 191–195 (FTTLH), 213–216 (DIPG), 284–287 (NKLD), and 315–317 (SAL). Residues S173 and T193 each contribute to the Mg(2+) site.

Belongs to the TRAFAC class OBG-HflX-like GTPase superfamily. OBG GTPase family. As to quaternary structure, monomer. Mg(2+) is required as a cofactor.

Its subcellular location is the cytoplasm. An essential GTPase which binds GTP, GDP and possibly (p)ppGpp with moderate affinity, with high nucleotide exchange rates and a fairly low GTP hydrolysis rate. Plays a role in control of the cell cycle, stress response, ribosome biogenesis and in those bacteria that undergo differentiation, in morphogenesis control. The polypeptide is GTPase Obg (Cupriavidus necator (strain ATCC 17699 / DSM 428 / KCTC 22496 / NCIMB 10442 / H16 / Stanier 337) (Ralstonia eutropha)).